We begin with the raw amino-acid sequence, 416 residues long: Squalene synthase (416 aa).

The NADP(+) site is built by arginine 52 and arginine 77. The Mg(2+) site is built by aspartate 80, glutamate 83, and aspartate 84. Position 218 (arginine 218) interacts with NADP(+). Residues 284–304 form a helical membrane-spanning segment; it reads SVFNFCAIPQVMAIATLAACY. NADP(+) contacts are provided by lysine 315 and arginine 317. The helical transmembrane segment at 384–404 threads the bilayer; the sequence is PIYLSFIMLLAALSWQYLSTL.

This sequence belongs to the phytoene/squalene synthase family. It depends on Mg(2+) as a cofactor.

It localises to the endoplasmic reticulum membrane. It carries out the reaction 2 (2E,6E)-farnesyl diphosphate + NADPH + H(+) = squalene + 2 diphosphate + NADP(+). The catalysed reaction is 2 (2E,6E)-farnesyl diphosphate + NADH + H(+) = squalene + 2 diphosphate + NAD(+). The enzyme catalyses presqualene diphosphate + NADH + H(+) = squalene + diphosphate + NAD(+). It catalyses the reaction presqualene diphosphate + NADPH + H(+) = squalene + diphosphate + NADP(+). It carries out the reaction 2 (2E,6E)-farnesyl diphosphate = presqualene diphosphate + diphosphate. The protein operates within terpene metabolism; lanosterol biosynthesis; lanosterol from farnesyl diphosphate: step 1/3. Functionally, catalyzes the condensation of 2 farnesyl pyrophosphate (FPP) moieties to form squalene. Proceeds in two distinct steps. In the first half-reaction, two molecules of FPP react to form the stable presqualene diphosphate intermediate (PSQPP), with concomitant release of a proton and a molecule of inorganic diphosphate. In the second half-reaction, PSQPP undergoes heterolysis, isomerization, and reduction with NADPH or NADH to form squalene. It is the first committed enzyme of the sterol biosynthesis pathway. In Rattus norvegicus (Rat), this protein is Squalene synthase (Fdft1).